The sequence spans 1679 residues: Probable myosin heavy chain ECU04_1000 (1679 aa).

The segment covering 1–14 (MEGTTNKDIGSGSS) has biased composition (polar residues). The tract at residues 1-22 (MEGTTNKDIGSGSSRPGGEVSV) is disordered. Residues 31 to 79 (MEKKWVWAPSSKEAYVCGFVVKEEGDVLEIDCRGVIVRHKSCEVFRMNP) form the Myosin N-terminal SH3-like domain. The Myosin motor domain maps to 83–754 (DMVDDLAELS…VLADIEDMRD (672 aa)). 176-183 (GESGAGKT) lines the ATP pocket. The actin-binding stretch occupies residues 624-646 (LASLMSELRRTNPHFVRCIIPNL). The stretch at 823–1644 (GEMKEKEAMI…SKMLEMKKKL (822 aa)) forms a coiled coil.

The protein belongs to the TRAFAC class myosin-kinesin ATPase superfamily. Myosin family.

Cellular myosin that appears to play a role in cytokinesis, cell shape, and specialized functions such as secretion and capping. This is Probable myosin heavy chain ECU04_1000 from Encephalitozoon cuniculi (strain GB-M1) (Microsporidian parasite).